The sequence spans 148 residues: Single-stranded DNA-binding protein, mitochondrial (148 aa).

A mitochondrion-targeting transit peptide spans 1–16; that stretch reads MFRRPALQVLRQFVRH. The SSB domain occupies 30-141; the sequence is LNRVQLLGRV…IIADNIVFLS (112 aa). Residues Ser-67 and Ser-79 each carry the phosphoserine modification. N6-acetyllysine is present on Lys-113. An N6-succinyllysine modification is found at Lys-122.

In terms of assembly, homotetramer. Interacts with MPG/AAG, through inhibition of its glycosylase activity it potentially prevents formation of DNA breaks in ssDNA, ensuring that base removal primarily occurs in dsDNA. Interacts with POLDIP2. Interacts with PRIMPOL.

It localises to the mitochondrion. Its subcellular location is the mitochondrion matrix. The protein resides in the mitochondrion nucleoid. Functionally, binds preferentially and cooperatively to pyrimidine rich single-stranded DNA (ss-DNA). In vitro, required to maintain the copy number of mitochondrial DNA (mtDNA) and plays a crucial role during mtDNA replication by stimulating the activity of the replisome components POLG and TWNK at the replication fork. Promotes the activity of the gamma complex polymerase POLG, largely by organizing the template DNA and eliminating secondary structures to favor ss-DNA conformations that facilitate POLG activity. In addition it is able to promote the 5'-3' unwinding activity of the mtDNA helicase TWNK. May also function in mtDNA repair. The protein is Single-stranded DNA-binding protein, mitochondrial (SSBP1) of Oryctolagus cuniculus (Rabbit).